Here is a 390-residue protein sequence, read N- to C-terminus: 3,5-dihydroxyphenylacetyl-CoA synthase (390 aa).

Cys-173 is an active-site residue.

The protein belongs to the thiolase-like superfamily. Chalcone/stilbene synthases family.

The enzyme catalyses 4 malonyl-CoA + 4 H(+) = (3,5-dihydroxyphenyl)acetyl-CoA + 4 CO2 + 3 CoA + H2O. It functions in the pathway antibiotic biosynthesis; vancomycin biosynthesis. Functionally, involved in the biosynthesis of the nonproteinogenic amino acid monomer (S)-3,5-dihydroxyphenylglycine (Dpg) responsible of the production of vancomycin and teicoplanin antibiotics. Catalyzes the Claisen condensation of four molecules of malonyl-CoA to yield 3,5-dihydroxyphenylacetyl-CoA (DPA-CoA) and three free coenzyme A (CoA). DpgA requires the presence of the dehydratases DpgB and DpgD to facilitate the aromatization of the DPA-S-DgpA or DPA-S-CoA intermediate. The chain is 3,5-dihydroxyphenylacetyl-CoA synthase from Streptomyces toyocaensis.